A 346-amino-acid chain; its full sequence is Probable electron transfer flavoprotein subunit alpha, mitochondrial (346 aa).

FAD is bound at residue 285 to 313; the sequence is LYVAIGISGAIQHLAGMKESKMIIAINKD.

Belongs to the ETF alpha-subunit/FixB family. In terms of assembly, heterodimer of an alpha and a beta subunit. The cofactor is FAD.

It localises to the mitochondrion matrix. Functionally, the electron transfer flavoprotein serves as a specific electron acceptor for several dehydrogenases, including five acyl-CoA dehydrogenases, glutaryl-CoA and sarcosine dehydrogenase. It transfers the electrons to the main mitochondrial respiratory chain via ETF-ubiquinone oxidoreductase (ETF dehydrogenase). In Cryptococcus neoformans var. neoformans serotype D (strain B-3501A) (Filobasidiella neoformans), this protein is Probable electron transfer flavoprotein subunit alpha, mitochondrial (ETF1).